A 177-amino-acid polypeptide reads, in one-letter code: Basic form of pathogenesis-related protein 1 (177 aa).

The first 23 residues, Met-1 to Ala-23, serve as a signal peptide directing secretion. At Gln-24 the chain carries Pyrrolidone carboxylic acid. In terms of domain architecture, SCP spans Leu-31–Tyr-147.

It belongs to the CRISP family. Two disulfide bonds are present.

Its function is as follows. Probably involved in the defense reaction of plants against pathogens. This Nicotiana tabacum (Common tobacco) protein is Basic form of pathogenesis-related protein 1.